We begin with the raw amino-acid sequence, 571 residues long: Proline--tRNA ligase (571 aa).

The protein belongs to the class-II aminoacyl-tRNA synthetase family. ProS type 1 subfamily. In terms of assembly, homodimer.

It localises to the cytoplasm. It catalyses the reaction tRNA(Pro) + L-proline + ATP = L-prolyl-tRNA(Pro) + AMP + diphosphate. In terms of biological role, catalyzes the attachment of proline to tRNA(Pro) in a two-step reaction: proline is first activated by ATP to form Pro-AMP and then transferred to the acceptor end of tRNA(Pro). As ProRS can inadvertently accommodate and process non-cognate amino acids such as alanine and cysteine, to avoid such errors it has two additional distinct editing activities against alanine. One activity is designated as 'pretransfer' editing and involves the tRNA(Pro)-independent hydrolysis of activated Ala-AMP. The other activity is designated 'posttransfer' editing and involves deacylation of mischarged Ala-tRNA(Pro). The misacylated Cys-tRNA(Pro) is not edited by ProRS. The chain is Proline--tRNA ligase from Pseudomonas aeruginosa (strain UCBPP-PA14).